The following is a 142-amino-acid chain: Large ribosomal subunit protein uL13 (142 aa).

This sequence belongs to the universal ribosomal protein uL13 family. As to quaternary structure, part of the 50S ribosomal subunit.

Functionally, this protein is one of the early assembly proteins of the 50S ribosomal subunit, although it is not seen to bind rRNA by itself. It is important during the early stages of 50S assembly. This Dechloromonas aromatica (strain RCB) protein is Large ribosomal subunit protein uL13.